The sequence spans 287 residues: AA9 family lytic polysaccharide monooxygenase C (287 aa).

A signal peptide spans 1-16 (MKSVLVALATATAVSA). His-17 is a Cu(2+) binding site. N-linked (GlcNAc...) asparagine glycosylation is present at Asn-22. Disulfide bonds link Cys-77/Cys-230 and Cys-200/Cys-284. His-114 contacts Cu(2+). The O2 site is built by His-216 and Gln-225. Tyr-227 contacts Cu(2+).

Belongs to the polysaccharide monooxygenase AA9 family. The cofactor is Cu(2+).

The protein localises to the secreted. It carries out the reaction [(1-&gt;4)-beta-D-glucosyl]n+m + reduced acceptor + O2 = 4-dehydro-beta-D-glucosyl-[(1-&gt;4)-beta-D-glucosyl]n-1 + [(1-&gt;4)-beta-D-glucosyl]m + acceptor + H2O.. Functionally, lytic polysaccharide monooxygenase (LPMO) that depolymerizes crystalline and amorphous polysaccharides via the oxidation of scissile alpha- or beta-(1-4)-glycosidic bonds, yielding C1 or C4 oxidation products. Catalysis by LPMOs requires the reduction of the active-site copper from Cu(II) to Cu(I) by a reducing agent and H(2)O(2) or O(2) as a cosubstrate. This is AA9 family lytic polysaccharide monooxygenase C from Podospora anserina (strain S / ATCC MYA-4624 / DSM 980 / FGSC 10383) (Pleurage anserina).